We begin with the raw amino-acid sequence, 496 residues long: Cyclin-dependent kinase 16 (496 aa).

The disordered stretch occupies residues 1-97 (MDRMKKIKRQ…TSSDEVQSPV (97 aa)). Position 12 is a phosphoserine; by BRSK2 (S12). A phosphoserine mark is found at S36, S42, S64, S65, S78, S82, and S89. Positions 69-78 (IVHEDLKMGS) are enriched in basic and acidic residues. Positions 83 to 93 (DQASATSSDEV) are enriched in polar residues. A Phosphoserine; by CDK5 modification is found at S95. Phosphoserine occurs at positions 110, 119, 138, 146, 153, and 155. The region spanning 165 to 446 (YIKLDKLGEG…AEDAMKHPFF (282 aa)) is the Protein kinase domain. Residues 171-179 (LGEGTYATV) and K194 contribute to the ATP site. Phosphothreonine is present on T175. D286 (proton acceptor) is an active-site residue. Position 380 is a phosphothreonine (T380). Phosphoserine occurs at positions 391, 478, and 480.

Belongs to the protein kinase superfamily. CMGC Ser/Thr protein kinase family. CDC2/CDKX subfamily. As to quaternary structure, found in a complex containing CABLES1, CDK17 and TDRD7. Interacts with BRSK2. Identified in a complex with NSF, syntaxin-1, synaptotagmin, SYN1, SYP and CDK5R1. Interacts with YWHAH, YWHAQ and YWHAZ. Interacts with CCNY; this interaction increases the CDK16 kinase activity. Interacts with CCNYL1; this interaction mutually increases the stability of CDK16 and CCNYL1 and increases the kinase activity of CDK16. Interacts with NSF. In terms of processing, phosphorylation of CDK16 is essential for the binding of CCNY, but also essential for the regulation of CDK16 kinase activity. Phosphorylation of CDK16 is essential for the binding of CCNYl1, but also essential for the regulation of CDK16 kinase activity. Ser-146 and Ser-153 are the most critical sites for the binding of CCNYL1 and for modulating CDK16 kinase activity. Phosphorylation at Ser-153 inhibits kinase activity. As to expression, detected in pancreas islets (at protein level). Detected in brain and pancreas.

Its subcellular location is the cytoplasm. The protein resides in the cytoplasmic vesicle. It is found in the secretory vesicle. The protein localises to the cell membrane. It localises to the synapse. Its subcellular location is the synaptosome. The enzyme catalyses L-seryl-[protein] + ATP = O-phospho-L-seryl-[protein] + ADP + H(+). It catalyses the reaction L-threonyl-[protein] + ATP = O-phospho-L-threonyl-[protein] + ADP + H(+). Protein kinase that plays a role in vesicle-mediated transport processes and exocytosis. Regulates GH1 release by brain neurons. Phosphorylates NSF, and thereby regulates NSF oligomerization. Required for normal spermatogenesis. Regulates neuron differentiation and dendrite development. Plays a role in the regulation of insulin secretion in response to changes in blood glucose levels. Can phosphorylate CCNY at 'Ser-336' (in vitro). In Homo sapiens (Human), this protein is Cyclin-dependent kinase 16 (CDK16).